Consider the following 717-residue polypeptide: Polyribonucleotide nucleotidyltransferase (717 aa).

Mg(2+)-binding residues include aspartate 486 and aspartate 492. Residues 553–612 (PKIIQLQIDIDKISLVIGSTGKTVKAITDEFEVRVQIEQDGRITLFGTDSLKMQKAKARI) form the KH domain. Residues 622-715 (GEIYEGVVKK…KFGKIELELV (94 aa)) enclose the S1 motif domain. Residues 650-683 (SNRPKSRDDRYGDMRHSRYGSGRHSRYGRDSRNT) are disordered. Positions 654–665 (KSRDDRYGDMRH) are enriched in basic and acidic residues. Positions 666-675 (SRYGSGRHSR) are enriched in basic residues.

Belongs to the polyribonucleotide nucleotidyltransferase family. It depends on Mg(2+) as a cofactor.

Its subcellular location is the cytoplasm. It catalyses the reaction RNA(n+1) + phosphate = RNA(n) + a ribonucleoside 5'-diphosphate. In terms of biological role, involved in mRNA degradation. Catalyzes the phosphorolysis of single-stranded polyribonucleotides processively in the 3'- to 5'-direction. In Borrelia turicatae (strain 91E135), this protein is Polyribonucleotide nucleotidyltransferase.